We begin with the raw amino-acid sequence, 290 residues long: CTP-dependent diacylglycerol kinase 1 (290 aa).

The segment at 1-33 (MGTEDAIALPNSTLEPRTEAKQRLSSKSHQVSA) is disordered. Residues 1–77 (MGTEDAIALP…FITKHEIPRK (77 aa)) lie on the Lumenal side of the membrane. The N-linked (GlcNAc...) asparagine glycan is linked to Asn-11. The span at 23 to 33 (RLSSKSHQVSA) shows a compositional bias: polar residues. A phosphoserine mark is found at Ser-44, Ser-45, and Ser-46. The helical transmembrane segment at 78–95 (VFHSSIGFITLYLYTQGI) threads the bilayer. Over 96-103 (NYKNVLWP) the chain is Cytoplasmic. The helical transmembrane segment at 104–124 (LIYAFIILFILDLIRLNWPFF) threads the bilayer. Residues 125 to 140 (NMLYCRTVGALMRKKE) lie on the Lumenal side of the membrane. A helical membrane pass occupies residues 141 to 161 (IHTYNGVLWYILGLIFSFNFF). Over 162 to 163 (SK) the chain is Cytoplasmic. The helical transmembrane segment at 164–184 (DVTLISLFLLSWSDTAAATIG) threads the bilayer. Residues 185–203 (RKYGHLTPKVARNKSLAGS) lie on the Lumenal side of the membrane. Asn-197 is a glycosylation site (N-linked (GlcNAc...) asparagine). Residues 204–224 (IAAFTVGVITCWVFYGYFVPA) form a helical membrane-spanning segment. Topologically, residues 225 to 244 (YSYVNKPGEIQWSPETSRLS) are cytoplasmic. A helical membrane pass occupies residues 245–265 (LNMLSLLGGVVAALSEGIDLF). Residues 266-290 (NWDDNFTIPVLSSLFMNAVIKTFKK) are Lumenal-facing. Residue Asn-270 is glycosylated (N-linked (GlcNAc...) asparagine).

It belongs to the DGK1 family. Ca(2+) is required as a cofactor. Mg(2+) serves as cofactor. In terms of processing, CKII-mediated phosphorylation of Ser-45 and Ser-46 regulates its function in the production of PA.

The protein resides in the endoplasmic reticulum membrane. It localises to the nucleus membrane. It carries out the reaction a 1,2-diacyl-sn-glycerol + CTP = a 1,2-diacyl-sn-glycero-3-phosphate + CDP + H(+). The enzyme catalyses 1,2-di-(9Z-octadecenoyl)-sn-glycerol + CTP = 1,2-di-(9Z-octadecenoyl)-sn-glycero-3-phosphate + CDP + H(+). With respect to regulation, inhibited by N-ethylmaleimide, dCTP, and sphingoid bases including sphinganine, sphingosine and phytosphingosine. DAG pyrophosphate, cardiolipin, CDP-DAG, and lyso-PA inhibited activity by 23-66%. Also inhibited by Ca(2+) concentrations of more than 1 mM, by addition of EDTA or EGTA at 5 mM, and by 5 mM Mn(2+) and Zn(2+). Stimulated by major membrane phospholipids including phosphatidylcholine, phosphatidylethanolamine, phosphatidylinositol, phosphatidylserine, phosphatidylglycerol, and phosphatidate. Also stimulated to a maximum by addition of TritonX-100 at a concentration of 1 mM, followed by an apparent inhibition of activity at concentrations above 1 mM. CTP-dependent diacylglycerol kinase that catalyzes the phosphorylation of diacylglycerol (DAG) to phosphatidate (PA). Controls phosphatidate levels at the nuclear envelope. Counteracts the activity of PA phosphatase PAH1/SMP2, controlling the levels of PA and DAG for the synthesis of triacylglycerol and membrane phospholipids. May be involved in vesicle trafficking between the endoplasmic reticulum and the Golgi apparatus. Required to convert triacylglycerol-derived DAG to PA for phospholipid synthesis during growth resumption from stationary phase in the absence of de novo fatty acid synthesis. Involved in the resistance to nickel chloride and nalidixic acid. The chain is CTP-dependent diacylglycerol kinase 1 (DGK1) from Saccharomyces cerevisiae (strain ATCC 204508 / S288c) (Baker's yeast).